We begin with the raw amino-acid sequence, 407 residues long: Glycolate oxidase iron-sulfur subunit (407 aa).

4Fe-4S ferredoxin-type domains lie at 14–47 and 66–95; these read RALEADSILRACVHCGFCTATCPTYQLLGDELDG and LKTQEHLDRCLTCRNCETTCPSGVRYHNLL. Residues Cys25, Cys28, Cys31, Cys35, Cys75, Cys78, Cys81, and Cys85 each coordinate [4Fe-4S] cluster.

As to quaternary structure, the glycolate oxidase likely consists of three subunits, GlcD, GlcE and GlcF. [4Fe-4S] cluster serves as cofactor.

It localises to the cell inner membrane. The catalysed reaction is glycolate + A = glyoxylate + AH2. It catalyses the reaction (R)-lactate + A = pyruvate + AH2. Its activity is regulated as follows. In vitro the glycolate oxidase activity is inhibited by the sulfhydryl inhibitors CuSO4 and PCMB, by KCN, but not by the metal complexing agent EDTA. Functionally, component of a complex that catalyzes the oxidation of glycolate to glyoxylate. Is required for E.coli to grow on glycolate as a sole source of carbon. Is also able to oxidize D-lactate ((R)-lactate) with a similar rate. Does not link directly to O(2), and 2,6-dichloroindophenol (DCIP) and phenazine methosulfate (PMS) can act as artificial electron acceptors in vitro, but the physiological molecule that functions as a primary electron acceptor during glycolate oxidation is unknown. This Escherichia coli (strain K12) protein is Glycolate oxidase iron-sulfur subunit.